Here is a 583-residue protein sequence, read N- to C-terminus: Radixin (583 aa).

The FERM domain occupies 5–295 (INVRVTTMDA…GNHELYMRRR (291 aa)). Position 60–63 (60–63 (KLNK)) interacts with a 1,2-diacyl-sn-glycero-3-phospho-(1D-myo-inositol). Residue Lys83 is modified to N6-succinyllysine. Lys278 serves as a coordination point for a 1,2-diacyl-sn-glycero-3-phospho-(1D-myo-inositol). 3 disordered regions span residues 310–336 (REEK…AEKE), 374–407 (ELDQ…AKQA), and 458–526 (KTKE…RVNK). The segment covering 374 to 400 (ELDQERKRAKEEAERLEKERRAAEEAK) has biased composition (basic and acidic residues). Residues 469–480 (APPPPPPPPVVP) are compositionally biased toward pro residues. Basic and acidic residues-rich tracts occupy residues 483-492 (ENEHDEHDEN) and 506-525 (MNHR…ERVN). Thr564 bears the Phosphothreonine; by ROCK2 mark.

As to quaternary structure, interacts with CPNE1 (via VWFA domain) and CPNE4 (via VWFA domain). Binds NHERF1. Interacts with NHERF1, NHERF2, LAYN, MME/NEP and ICAM2. Interacts (via FERM domain) with SPN/CD43 cytoplasmic tail. Interacts with CD44. Interacts with CLIC5; may work together in a complex which also includes EZR and MYO6 to stabilize linkages between the plasma membrane and subjacent actin cytoskeleton at the base of stereocilia. Post-translationally, phosphorylated by tyrosine-protein kinases. Phosphorylation by ROCK2 suppresses the head-to-tail association of the N-terminal and C-terminal halves resulting in an opened conformation which is capable of actin and membrane-binding.

The protein resides in the cell membrane. It localises to the cytoplasm. The protein localises to the cytoskeleton. Its subcellular location is the cleavage furrow. It is found in the cell projection. The protein resides in the microvillus. It localises to the stereocilium. With respect to regulation, a head-to-tail association, of the N-terminal and C-terminal halves results in a closed conformation (inactive form) which is incapable of actin or membrane-binding. Functionally, probably plays a crucial role in the binding of the barbed end of actin filaments to the plasma membrane. The polypeptide is Radixin (RDX) (Sus scrofa (Pig)).